We begin with the raw amino-acid sequence, 149 residues long: Large ribosomal subunit protein uL15 (149 aa).

2 stretches are compositionally biased toward basic residues: residues 1–14 (MPSR…HRGH) and 21–30 (RIGKHRKHPG). A disordered region spans residues 1-39 (MPSRFTKTRKHRGHVSAGKGRIGKHRKHPGGRGMAGGQH). 2 consecutive short sequence motifs (nuclear localization signal) follow at residues 7–13 (KTRKHRG) and 24–30 (KHRKHPG). Lys96 is covalently cross-linked (Glycyl lysine isopeptide (Lys-Gly) (interchain with G-Cter in ubiquitin)).

It belongs to the universal ribosomal protein uL15 family. Component of the large ribosomal subunit (LSU). Mature yeast ribosomes consist of a small (40S) and a large (60S) subunit. The 40S small subunit contains 1 molecule of ribosomal RNA (18S rRNA) and 33 different proteins (encoded by 57 genes). The large 60S subunit contains 3 rRNA molecules (25S, 5.8S and 5S rRNA) and 46 different proteins (encoded by 81 genes).

The protein resides in the cytoplasm. Component of the ribosome, a large ribonucleoprotein complex responsible for the synthesis of proteins in the cell. The small ribosomal subunit (SSU) binds messenger RNAs (mRNAs) and translates the encoded message by selecting cognate aminoacyl-transfer RNA (tRNA) molecules. The large subunit (LSU) contains the ribosomal catalytic site termed the peptidyl transferase center (PTC), which catalyzes the formation of peptide bonds, thereby polymerizing the amino acids delivered by tRNAs into a polypeptide chain. The nascent polypeptides leave the ribosome through a tunnel in the LSU and interact with protein factors that function in enzymatic processing, targeting, and the membrane insertion of nascent chains at the exit of the ribosomal tunnel. The protein is Large ribosomal subunit protein uL15 of Saccharomyces cerevisiae (strain ATCC 204508 / S288c) (Baker's yeast).